The chain runs to 69 residues: Large ribosomal subunit protein bL28 (69 aa).

The protein belongs to the bacterial ribosomal protein bL28 family.

This is Large ribosomal subunit protein bL28 from Nitratidesulfovibrio vulgaris (strain DSM 19637 / Miyazaki F) (Desulfovibrio vulgaris).